The sequence spans 404 residues: UBP1-associated protein 2C (404 aa).

Residues 1–29 (MDMMKKRKLDENGNGLNTNGGGTIGPTRL) form a disordered region. 2 RRM domains span residues 75-152 (RKLF…LAAS) and 167-248 (RKIY…GKKG). 2 disordered regions span residues 246 to 270 (KKGG…HGEG) and 344 to 404 (GSGQ…PPNY).

Expressed in root apical and lateral meristems, young leaves and embryos.

The protein localises to the nucleus. Its function is as follows. Heterogeneous nuclear ribonucleoprotein (hnRNP)-like protein that acts as a component of a complex regulating the turnover of mRNAs in the nucleus. Binds with high affinity to RNA molecules that contain U-rich sequences in 3'-UTRs. May function in complex with UBP1 and contribute to the stabilization of mRNAs in the nucleus. The chain is UBP1-associated protein 2C (UBA2C) from Arabidopsis thaliana (Mouse-ear cress).